The chain runs to 274 residues: S-methyl-5'-thioadenosine phosphorylase (274 aa).

Phosphate-binding positions include Ser-20, 62–63 (RH), and 95–96 (SA). Met-194 provides a ligand contact to substrate. Residue Thr-195 coordinates phosphate. 218–220 (DYD) contributes to the substrate binding site.

The protein belongs to the PNP/MTAP phosphorylase family. MTAP subfamily. In terms of assembly, homohexamer. Dimer of a homotrimer.

It carries out the reaction S-methyl-5'-thioadenosine + phosphate = 5-(methylsulfanyl)-alpha-D-ribose 1-phosphate + adenine. The protein operates within amino-acid biosynthesis; L-methionine biosynthesis via salvage pathway; S-methyl-5-thio-alpha-D-ribose 1-phosphate from S-methyl-5'-thioadenosine (phosphorylase route): step 1/1. Catalyzes the reversible phosphorylation of S-methyl-5'-thioadenosine (MTA) to adenine and 5-methylthioribose-1-phosphate. Involved in the breakdown of MTA, a major by-product of polyamine biosynthesis. Responsible for the first step in the methionine salvage pathway after MTA has been generated from S-adenosylmethionine. Has broad substrate specificity with 6-aminopurine nucleosides as preferred substrates. This Hyperthermus butylicus (strain DSM 5456 / JCM 9403 / PLM1-5) protein is S-methyl-5'-thioadenosine phosphorylase.